The primary structure comprises 66 residues: Large ribosomal subunit protein bL33c (66 aa).

This sequence belongs to the bacterial ribosomal protein bL33 family.

Its subcellular location is the plastid. It localises to the chloroplast. The chain is Large ribosomal subunit protein bL33c from Daucus carota (Wild carrot).